A 419-amino-acid chain; its full sequence is UDP-N-acetylglucosamine 1-carboxyvinyltransferase (419 aa).

Phosphoenolpyruvate is bound at residue 22 to 23 (KN). Arg-93 provides a ligand contact to UDP-N-acetyl-alpha-D-glucosamine. The active-site Proton donor is Cys-117. At Cys-117 the chain carries 2-(S-cysteinyl)pyruvic acid O-phosphothioketal. UDP-N-acetyl-alpha-D-glucosamine contacts are provided by Asp-307 and Ile-329.

The protein belongs to the EPSP synthase family. MurA subfamily.

It localises to the cytoplasm. The enzyme catalyses phosphoenolpyruvate + UDP-N-acetyl-alpha-D-glucosamine = UDP-N-acetyl-3-O-(1-carboxyvinyl)-alpha-D-glucosamine + phosphate. The protein operates within cell wall biogenesis; peptidoglycan biosynthesis. Functionally, cell wall formation. Adds enolpyruvyl to UDP-N-acetylglucosamine. In Shewanella woodyi (strain ATCC 51908 / MS32), this protein is UDP-N-acetylglucosamine 1-carboxyvinyltransferase.